Here is a 115-residue protein sequence, read N- to C-terminus: Non-specific lipid-transfer protein 4.2 (115 aa).

The N-terminal stretch at 1–25 (MARAAATQLVLVAMVAAMLIVATDA) is a signal peptide. Disulfide bonds link Cys-29–Cys-77, Cys-39–Cys-54, Cys-55–Cys-97, and Cys-75–Cys-111.

This sequence belongs to the plant LTP family.

Plant non-specific lipid-transfer proteins transfer phospholipids as well as galactolipids across membranes. May play a role in wax or cutin deposition in the cell walls of expanding epidermal cells and certain secretory tissues. This is Non-specific lipid-transfer protein 4.2 (LTP4.2) from Hordeum vulgare (Barley).